Reading from the N-terminus, the 349-residue chain is Ferredoxin--NADP reductase 1 (349 aa).

FAD contacts are provided by E36, K44, Y48, I88, L123, D290, and S331.

It belongs to the ferredoxin--NADP reductase type 2 family. As to quaternary structure, homodimer. The cofactor is FAD.

It catalyses the reaction 2 reduced [2Fe-2S]-[ferredoxin] + NADP(+) + H(+) = 2 oxidized [2Fe-2S]-[ferredoxin] + NADPH. The sequence is that of Ferredoxin--NADP reductase 1 from Bacillus mycoides (strain KBAB4) (Bacillus weihenstephanensis).